Consider the following 293-residue polypeptide: 33 kDa chaperonin (293 aa).

2 disulfides stabilise this stretch: Cys237–Cys239 and Cys271–Cys274.

It belongs to the HSP33 family. In terms of processing, under oxidizing conditions two disulfide bonds are formed involving the reactive cysteines. Under reducing conditions zinc is bound to the reactive cysteines and the protein is inactive.

Its subcellular location is the cytoplasm. Its function is as follows. Redox regulated molecular chaperone. Protects both thermally unfolding and oxidatively damaged proteins from irreversible aggregation. Plays an important role in the bacterial defense system toward oxidative stress. The protein is 33 kDa chaperonin of Haemophilus influenzae (strain PittGG).